The sequence spans 568 residues: CTP synthase (568 aa).

The interval 1–276 is amidoligase domain; sequence MPQARTIKHV…DAYLVRRLGL (276 aa). Ser-18 is a CTP binding site. Residue Ser-18 participates in UTP binding. Residues 19 to 24 and Asp-76 each bind ATP; that span reads SLGKGL. Mg(2+) contacts are provided by Asp-76 and Glu-150. CTP is bound by residues 157–159, 197–202, and Lys-233; these read DIE and KTKPTQ. UTP contacts are provided by residues 197–202 and Lys-233; that span reads KTKPTQ. Residues 301 to 550 form the Glutamine amidotransferase type-1 domain; that stretch reads RIALVGKYVD…VNAALEYRAA (250 aa). Gly-364 lines the L-glutamine pocket. Cys-391 serves as the catalytic Nucleophile; for glutamine hydrolysis. L-glutamine-binding positions include 392–395, Glu-415, and Arg-476; that span reads LGLQ. Residues His-523 and Glu-525 contribute to the active site.

It belongs to the CTP synthase family. In terms of assembly, homotetramer.

The catalysed reaction is UTP + L-glutamine + ATP + H2O = CTP + L-glutamate + ADP + phosphate + 2 H(+). The enzyme catalyses L-glutamine + H2O = L-glutamate + NH4(+). It carries out the reaction UTP + NH4(+) + ATP = CTP + ADP + phosphate + 2 H(+). It participates in pyrimidine metabolism; CTP biosynthesis via de novo pathway; CTP from UDP: step 2/2. Its activity is regulated as follows. Allosterically activated by GTP, when glutamine is the substrate; GTP has no effect on the reaction when ammonia is the substrate. The allosteric effector GTP functions by stabilizing the protein conformation that binds the tetrahedral intermediate(s) formed during glutamine hydrolysis. Inhibited by the product CTP, via allosteric rather than competitive inhibition. Its function is as follows. Catalyzes the ATP-dependent amination of UTP to CTP with either L-glutamine or ammonia as the source of nitrogen. Regulates intracellular CTP levels through interactions with the four ribonucleotide triphosphates. The sequence is that of CTP synthase from Saccharopolyspora erythraea (strain ATCC 11635 / DSM 40517 / JCM 4748 / NBRC 13426 / NCIMB 8594 / NRRL 2338).